The chain runs to 266 residues: Thymidylate synthase (266 aa).

Arg24 serves as a coordination point for dUMP. Residue His54 coordinates (6R)-5,10-methylene-5,6,7,8-tetrahydrofolate. 129 to 130 is a dUMP binding site; it reads RR. Cys149 serves as the catalytic Nucleophile. DUMP is bound by residues 169–172, Asn180, and 210–212; these read RSAD and HIY. Asp172 serves as a coordination point for (6R)-5,10-methylene-5,6,7,8-tetrahydrofolate. Position 265 (Ala265) interacts with (6R)-5,10-methylene-5,6,7,8-tetrahydrofolate.

Belongs to the thymidylate synthase family. Bacterial-type ThyA subfamily. As to quaternary structure, homodimer.

The protein localises to the cytoplasm. The enzyme catalyses dUMP + (6R)-5,10-methylene-5,6,7,8-tetrahydrofolate = 7,8-dihydrofolate + dTMP. It functions in the pathway pyrimidine metabolism; dTTP biosynthesis. In terms of biological role, catalyzes the reductive methylation of 2'-deoxyuridine-5'-monophosphate (dUMP) to 2'-deoxythymidine-5'-monophosphate (dTMP) while utilizing 5,10-methylenetetrahydrofolate (mTHF) as the methyl donor and reductant in the reaction, yielding dihydrofolate (DHF) as a by-product. This enzymatic reaction provides an intracellular de novo source of dTMP, an essential precursor for DNA biosynthesis. The protein is Thymidylate synthase of Mycobacterium leprae (strain TN).